We begin with the raw amino-acid sequence, 227 residues long: MGHKVNPTGIRLGVIKEHNSVWYADKKDYAKNLLNDIQVREFLDKRLVKASVSKIVIERPAQNARITIHTARPGIVIGKKGEDVDRLRREVSDMMGVPVHINIEEVRKPDLDARLVAQNVAGQLERRVMFRRAMKRAVQNAMRQGAKGIKIQVGGRLGGAEIARSEWYREGRVPLHTLRADIDYATYEAHTTYGVIGVKVWIFKGEILGGMEQVRADKKASGKKGSK.

The KH type-2 domain occupies 39-107; the sequence is VREFLDKRLV…PVHINIEEVR (69 aa).

It belongs to the universal ribosomal protein uS3 family. Part of the 30S ribosomal subunit. Forms a tight complex with proteins S10 and S14.

Its function is as follows. Binds the lower part of the 30S subunit head. Binds mRNA in the 70S ribosome, positioning it for translation. The sequence is that of Small ribosomal subunit protein uS3 from Marinobacter nauticus (strain ATCC 700491 / DSM 11845 / VT8) (Marinobacter aquaeolei).